A 341-amino-acid polypeptide reads, in one-letter code: NADH-quinone oxidoreductase subunit H 2 (341 aa).

8 helical membrane-spanning segments follow: residues 13 to 33, 82 to 102, 115 to 135, 161 to 181, 190 to 210, 248 to 268, 277 to 297, and 317 to 337; these read IIVI…IAYI, GVFL…WAVI, VGVL…IMAG, IGFV…TAIV, MLGW…VSAL, YVAI…GWLP, WVPG…LFAM, and VFLP…QFAG.

It belongs to the complex I subunit 1 family. NDH-1 is composed of 14 different subunits. Subunits NuoA, H, J, K, L, M, N constitute the membrane sector of the complex.

The protein localises to the cell inner membrane. The enzyme catalyses a quinone + NADH + 5 H(+)(in) = a quinol + NAD(+) + 4 H(+)(out). In terms of biological role, NDH-1 shuttles electrons from NADH, via FMN and iron-sulfur (Fe-S) centers, to quinones in the respiratory chain. The immediate electron acceptor for the enzyme in this species is believed to be ubiquinone. Couples the redox reaction to proton translocation (for every two electrons transferred, four hydrogen ions are translocated across the cytoplasmic membrane), and thus conserves the redox energy in a proton gradient. This subunit may bind ubiquinone. This Rhodopseudomonas palustris (strain BisB5) protein is NADH-quinone oxidoreductase subunit H 2.